An 89-amino-acid polypeptide reads, in one-letter code: Large ribosomal subunit protein bL27 (89 aa).

Residues 1–21 (MAHKKAGGSSRNGRDSKGKRL) are disordered.

It belongs to the bacterial ribosomal protein bL27 family.

This is Large ribosomal subunit protein bL27 from Bradyrhizobium diazoefficiens (strain JCM 10833 / BCRC 13528 / IAM 13628 / NBRC 14792 / USDA 110).